The primary structure comprises 681 residues: Envelope glycoprotein (681 aa).

The first 18 residues, 1–18 (MKTTCLLISLILIQGVKT), serve as a signal peptide directing secretion. At 19–648 (LPILEIASNI…GLGGKWWTSD (630 aa)) the chain is on the extracellular side. The interval 38-188 (SGTLQKTEDV…FSRQGQGYRH (151 aa)) is receptor-binding. N94, N171, N190, N202, N207, N219, N223, and N255 each carry an N-linked (GlcNAc...) asparagine; by host glycan. The tract at residues 222 to 424 (KNQTCAPSKK…TSPSPTPNST (203 aa)) is disordered. Polar residues-rich tracts occupy residues 244-259 (LTST…TTDP), 278-290 (PYTT…KQGL), and 308-331 (GGNN…TAQP). The segment at 277–455 (EPYTTSDAAT…PFLDGLINAP (179 aa)) is mucin-like region. Residues N310, N313, N326, N337, N344, N345, N350, N360, N397, N408, N422, and N487 are each glycosylated (N-linked (GlcNAc...) asparagine; by host). Low complexity predominate over residues 337 to 347 (NTTTISTNNTS). Residues 348 to 388 (KHNLSTPSVPIQNATNYNTQSTAPENEQTSAPSKTTLLPTE) are compositionally biased toward polar residues. A compositionally biased stretch (low complexity) spans 389–424 (NPTTAKSTNSTKSPTTTVPNTTNKYSTSPSPTPNST). A fusion peptide region spans residues 529–549 (GLSWIPFFGPGIEGLYTAGLI). N-linked (GlcNAc...) asparagine; by host glycosylation is found at N564 and N619. A helical membrane pass occupies residues 649 to 669 (WGVLTNLGILLLLSIAVLIAL). At 670–681 (SCICRIFTKYIG) the chain is on the cytoplasmic side. S-palmitoyl cysteine; by host attachment occurs at residues C671 and C673.

The protein belongs to the filoviruses glycoprotein family. As to quaternary structure, homotrimer; each monomer consists of a GP1 and a GP2 subunit linked by disulfide bonds. The resulting peplomers (GP1,2) protrude from the virus surface as spikes. GP1,2 interacts with human CD209 and CLEC4M (collectively referred to as DC-SIGN(R)). Asialoglycoprotein receptor (ASGP-R) may be a liver-specific receptor for GP1,2. Members of the Tyro3 receptor tyrosine kinase family may be cell entry factors interacting with GP1,2. Post-translationally, N-glycosylated. In terms of processing, O-glycosylated in the mucin-like region. Specific enzymatic cleavages in vivo yield mature proteins. The precursor is processed into GP1 and GP2 by host cell furin in the trans Golgi, and maybe by other host proteases, to yield the mature GP1 and GP2 proteins. The cleavage site corresponds to the furin optimal cleavage sequence [KR]-X-[KR]-R. Post-translationally, GP1 is phosphorylated on serine residues between residues 260 and 273.

Its subcellular location is the virion membrane. It is found in the host cell membrane. Its function is as follows. GP1 is responsible for binding to the receptor(s) on target cells. Interacts with CD209/DC-SIGN and CLEC4M/DC-SIGNR which act as cofactors for virus entry into the host cell. Binding to CD209 and CLEC4M, which are respectively found on dendritic cells (DCs), and on endothelial cells of liver sinusoids and lymph node sinuses, facilitate infection of macrophages and endothelial cells. These interactions not only facilitate virus cell entry, but also allow capture of viral particles by DCs and subsequent transmission to susceptible cells without DCs infection (trans infection). Functionally, GP2 acts as a class I viral fusion protein. Under the current model, the protein has at least 3 conformational states: pre-fusion native state, pre-hairpin intermediate state, and post-fusion hairpin state. During viral and target cell membrane fusion, the coiled coil regions (heptad repeats) assume a trimer-of-hairpins structure, positioning the fusion peptide in close proximity to the C-terminal region of the ectodomain. The formation of this structure appears to drive apposition and subsequent fusion of viral and target cell membranes. Responsible for penetration of the virus into the cell cytoplasm by mediating the fusion of the membrane of the endocytosed virus particle with the endosomal membrane. Low pH in endosomes induces an irreversible conformational change in GP2, releasing the fusion hydrophobic peptide. This Chlorocebus aethiops (Green monkey) protein is Envelope glycoprotein (GP).